The chain runs to 455 residues: tRNA modification GTPase MnmE (455 aa).

(6S)-5-formyl-5,6,7,8-tetrahydrofolate-binding residues include K29, E91, and R131. The 153-residue stretch at 226 to 378 (GLKVALVGLP…LIQELLKLAG (153 aa)) folds into the TrmE-type G domain. N236 serves as a coordination point for K(+). Residues 236-241 (NVGKSS), 255-261 (TDLPGTT), 280-283 (DTAG), and 341-344 (NKAD) contribute to the GTP site. S240 is a Mg(2+) binding site. K(+)-binding residues include T255, L257, and T260. T261 provides a ligand contact to Mg(2+). (6S)-5-formyl-5,6,7,8-tetrahydrofolate is bound at residue K455.

Belongs to the TRAFAC class TrmE-Era-EngA-EngB-Septin-like GTPase superfamily. TrmE GTPase family. Homodimer. Heterotetramer of two MnmE and two MnmG subunits. K(+) serves as cofactor.

Its subcellular location is the cytoplasm. Functionally, exhibits a very high intrinsic GTPase hydrolysis rate. Involved in the addition of a carboxymethylaminomethyl (cmnm) group at the wobble position (U34) of certain tRNAs, forming tRNA-cmnm(5)s(2)U34. The polypeptide is tRNA modification GTPase MnmE (Prochlorococcus marinus (strain SARG / CCMP1375 / SS120)).